The primary structure comprises 210 residues: Orotate phosphoribosyltransferase (210 aa).

5-phospho-alpha-D-ribose 1-diphosphate contacts are provided by residues Arg-94, Lys-98, His-100, and 120-128 (EDLISTGGS). Residue Ser-124 participates in orotate binding.

It belongs to the purine/pyrimidine phosphoribosyltransferase family. PyrE subfamily. In terms of assembly, homodimer. Mg(2+) is required as a cofactor.

The catalysed reaction is orotidine 5'-phosphate + diphosphate = orotate + 5-phospho-alpha-D-ribose 1-diphosphate. It functions in the pathway pyrimidine metabolism; UMP biosynthesis via de novo pathway; UMP from orotate: step 1/2. Its function is as follows. Catalyzes the transfer of a ribosyl phosphate group from 5-phosphoribose 1-diphosphate to orotate, leading to the formation of orotidine monophosphate (OMP). The polypeptide is Orotate phosphoribosyltransferase (Bacillus anthracis (strain A0248)).